The primary structure comprises 962 residues: Glycine dehydrogenase (decarboxylating) (962 aa).

Lysine 709 bears the N6-(pyridoxal phosphate)lysine mark.

The protein belongs to the GcvP family. The glycine cleavage system is composed of four proteins: P, T, L and H. The cofactor is pyridoxal 5'-phosphate.

It catalyses the reaction N(6)-[(R)-lipoyl]-L-lysyl-[glycine-cleavage complex H protein] + glycine + H(+) = N(6)-[(R)-S(8)-aminomethyldihydrolipoyl]-L-lysyl-[glycine-cleavage complex H protein] + CO2. Functionally, the glycine cleavage system catalyzes the degradation of glycine. The P protein binds the alpha-amino group of glycine through its pyridoxal phosphate cofactor; CO(2) is released and the remaining methylamine moiety is then transferred to the lipoamide cofactor of the H protein. This Shewanella putrefaciens (strain CN-32 / ATCC BAA-453) protein is Glycine dehydrogenase (decarboxylating).